A 455-amino-acid polypeptide reads, in one-letter code: MAAAKDVNLFGTDGIRGHVGQHLTPQLALQVGFCAGLELGQDASPHQPFILGQDSRNSSDMLAMALSAGLTAAGLDVWHIGLCPTPTVAYLTHHTEAVGGVMVSASHNPPADNGIKFFQANGTKLPPTTQGKIEQRIRAYSQQQPSGTWGHHFHRPELTKSYTDAIQTPLHAQVDFQGLKVVLDLAWGAATQLAPAVFKAMGAEVICLHDQPDGDRINVNCGSTHLAPLKAAVNLHEADVGFAFDGDADRVLAIDCQGRTVDGDYILYLWGKALQQQNQLPKDLIVATVMSNLGFELAWQQQGGTLLRAAVGDQNVHAEMLNHGSMLGGEQSGHILCPHYGVSGDGLLTALHLATIICQNKTRLSCLVDDSFQTYPQLLKNVRVEDRDRRRNWQECQPLQTLIDQATDDMGDQGRILVRASGTEPLIRVMVEARDMRMVNHWTDQLVRAVETHLA.

Residue Ser106 is the Phosphoserine intermediate of the active site. Mg(2+) is bound by residues Ser106, Asp245, Asp247, and Asp249. Residue Ser106 is modified to Phosphoserine.

It belongs to the phosphohexose mutase family. Mg(2+) is required as a cofactor. Activated by phosphorylation.

It carries out the reaction alpha-D-glucosamine 1-phosphate = D-glucosamine 6-phosphate. Catalyzes the conversion of glucosamine-6-phosphate to glucosamine-1-phosphate. The polypeptide is Phosphoglucosamine mutase (Acaryochloris marina (strain MBIC 11017)).